Here is a 522-residue protein sequence, read N- to C-terminus: DNA damage-binding protein CMR1 (522 aa).

The segment at 38 to 100 (AGVLEKSRAP…DNQLLKMGSP (63 aa)) is disordered. Residues 54-63 (TTNTRATKSA) are compositionally biased toward polar residues. Ser64 is subject to Phosphoserine. The residue at position 69 (Thr69) is a Phosphothreonine. The segment covering 75 to 84 (LRGESADDVK) has biased composition (basic and acidic residues). WD repeat units lie at residues 183–224 (ITYE…LADS), 239–281 (LFTK…EVLT), 287–327 (DDSL…SEYN), 331–371 (LADK…KKPE), 388–427 (DSRLSVSAVSYSPTDGTLVCNGYDDTIRLFDVKSRDHLSA), 442–481 (GRWTSILKARFKPNKNVFAIANMKRAIDIYNSEGQQLAHL), and 482–521 (PTATVPAVISWHPLRNWIAGGNSSGKIFLFTDDSGTIKQE). Position 224 is a phosphoserine (Ser224).

Belongs to the WD repeat DDB2/WDR76 family.

The protein resides in the cytoplasm. It localises to the nucleus. Its function is as follows. DNA-binding protein that binds to both single- and double-stranded DNA. Binds preferentially to UV-damaged DNA in vitro. May be involved in DNA-metabolic processes. This is DNA damage-binding protein CMR1 from Saccharomyces cerevisiae (strain ATCC 204508 / S288c) (Baker's yeast).